The sequence spans 109 residues: Ribonuclease P protein component (109 aa).

The protein belongs to the RnpA family. Consists of a catalytic RNA component (M1 or rnpB) and a protein subunit.

It carries out the reaction Endonucleolytic cleavage of RNA, removing 5'-extranucleotides from tRNA precursor.. Its function is as follows. RNaseP catalyzes the removal of the 5'-leader sequence from pre-tRNA to produce the mature 5'-terminus. It can also cleave other RNA substrates such as 4.5S RNA. The protein component plays an auxiliary but essential role in vivo by binding to the 5'-leader sequence and broadening the substrate specificity of the ribozyme. This is Ribonuclease P protein component from Nitratiruptor sp. (strain SB155-2).